The primary structure comprises 162 residues: Lipoprotein signal peptidase (162 aa).

2 helical membrane passes run 66–86 (PFFI…FRKL) and 92–112 (LAAV…IDRV). Active-site residues include aspartate 119 and aspartate 137. The chain crosses the membrane as a helical span at residues 132-152 (AFNVADSAICVGVALLALDMI).

It belongs to the peptidase A8 family.

It is found in the cell inner membrane. It catalyses the reaction Release of signal peptides from bacterial membrane prolipoproteins. Hydrolyzes -Xaa-Yaa-Zaa-|-(S,diacylglyceryl)Cys-, in which Xaa is hydrophobic (preferably Leu), and Yaa (Ala or Ser) and Zaa (Gly or Ala) have small, neutral side chains.. The protein operates within protein modification; lipoprotein biosynthesis (signal peptide cleavage). In terms of biological role, this protein specifically catalyzes the removal of signal peptides from prolipoproteins. This Geobacter metallireducens (strain ATCC 53774 / DSM 7210 / GS-15) protein is Lipoprotein signal peptidase.